Here is a 574-residue protein sequence, read N- to C-terminus: Serine carboxypeptidase ctsa-3.1 (574 aa).

A signal peptide spans 1 to 19 (MCRTLLGVAFLVVTVLSQG). N-linked (GlcNAc...) asparagine glycosylation is found at Asn48 and Asn163. Ser172 is an active-site residue. 4 N-linked (GlcNAc...) asparagine glycosylation sites follow: Asn241, Asn408, Asn414, and Asn426. Catalysis depends on residues Asp441 and His507. Residue Asn534 is glycosylated (N-linked (GlcNAc...) asparagine).

This sequence belongs to the peptidase S10 family.

The polypeptide is Serine carboxypeptidase ctsa-3.1 (Caenorhabditis elegans).